A 319-amino-acid polypeptide reads, in one-letter code: HTH-type transcriptional regulator YidZ (319 aa).

Residues 8-65 (LDLNLLLCLQLLMQERSVTKAAKRMNVTPSAVSKSLAKLRAWFDDPLFVNSPLGLSPT) form the HTH lysR-type domain. Residues 25-44 (VTKAAKRMNVTPSAVSKSLA) constitute a DNA-binding region (H-T-H motif).

This sequence belongs to the LysR transcriptional regulatory family.

Involved in anaerobic NO protection. This chain is HTH-type transcriptional regulator YidZ, found in Escherichia coli O6:H1 (strain CFT073 / ATCC 700928 / UPEC).